A 364-amino-acid polypeptide reads, in one-letter code: D-alanine--D-alanine ligase (364 aa).

One can recognise an ATP-grasp domain in the interval Lys-141–Ala-346. An ATP-binding site is contributed by Glu-174 to Glu-229. Residues Asp-300, Glu-313, and Asn-315 each coordinate Mg(2+).

This sequence belongs to the D-alanine--D-alanine ligase family. Mg(2+) serves as cofactor. Mn(2+) is required as a cofactor.

It is found in the cytoplasm. It catalyses the reaction 2 D-alanine + ATP = D-alanyl-D-alanine + ADP + phosphate + H(+). The protein operates within cell wall biogenesis; peptidoglycan biosynthesis. In terms of biological role, cell wall formation. The sequence is that of D-alanine--D-alanine ligase from Geobacillus thermodenitrificans (strain NG80-2).